Reading from the N-terminus, the 338-residue chain is tRNA N6-adenosine threonylcarbamoyltransferase (338 aa).

Fe cation is bound by residues histidine 111 and histidine 115. Substrate is bound by residues 134-138 (LVSGG), aspartate 167, glycine 180, and asparagine 272. Fe cation is bound at residue aspartate 300.

The protein belongs to the KAE1 / TsaD family. Fe(2+) is required as a cofactor.

It is found in the cytoplasm. The catalysed reaction is L-threonylcarbamoyladenylate + adenosine(37) in tRNA = N(6)-L-threonylcarbamoyladenosine(37) in tRNA + AMP + H(+). Functionally, required for the formation of a threonylcarbamoyl group on adenosine at position 37 (t(6)A37) in tRNAs that read codons beginning with adenine. Is involved in the transfer of the threonylcarbamoyl moiety of threonylcarbamoyl-AMP (TC-AMP) to the N6 group of A37, together with TsaE and TsaB. TsaD likely plays a direct catalytic role in this reaction. This is tRNA N6-adenosine threonylcarbamoyltransferase from Shewanella sp. (strain ANA-3).